The sequence spans 85 residues: U4-theraphotoxin-Hhn1i (85 aa).

Residues 1–22 (MKVTLIAILTCAAVLVLHTTAA) form the signal peptide. A propeptide spanning residues 23 to 48 (EELEAESQLMEVGMPDTELAAVDEER) is cleaved from the precursor. Cystine bridges form between C52–C66, C56–C77, and C71–C82.

The protein belongs to the neurotoxin 12 (Hwtx-2) family. 02 (Hwtx-2) subfamily. As to expression, expressed by the venom gland.

It is found in the secreted. Functionally, postsynaptic neurotoxin. This is U4-theraphotoxin-Hhn1i from Cyriopagopus hainanus (Chinese bird spider).